The following is a 509-amino-acid chain: Dihydrolipoyl dehydrogenase, mitochondrial (509 aa).

Residues Met-1–Tyr-35 constitute a mitochondrion transit peptide. An N6-acetyllysine; alternate modification is found at Lys-66. Lys-66 is subject to N6-succinyllysine; alternate. Residues Glu-71–Cys-80 and Lys-89 each bind FAD. Cys-80 and Cys-85 form a disulfide bridge. Residues Lys-104, Lys-122, Lys-132, and Lys-143 each carry the N6-acetyllysine; alternate modification. N6-succinyllysine; alternate occurs at positions 104, 122, 132, and 143. Gly-154 is a binding site for FAD. Residues Lys-159 and Lys-166 each carry the N6-succinyllysine modification. FAD is bound at residue Thr-183–Ser-185. NAD(+) contacts are provided by residues Gly-220–Glu-227 and Glu-243. Residues Lys-273 and Lys-277 each carry the N6-succinyllysine modification. Val-278 lines the NAD(+) pocket. Phosphoserine is present on residues Ser-285 and Ser-297. NAD(+) is bound at residue Gly-314. The residue at position 346 (Lys-346) is an N6-acetyllysine. Residues Asp-355 and Met-361–His-364 each bind FAD. Residue Lys-410 is modified to N6-acetyllysine; alternate. At Lys-410 the chain carries N6-succinyllysine; alternate. N6-acetyllysine is present on residues Lys-417 and Lys-420. Lys-430 carries the N6-succinyllysine modification. The Proton acceptor role is filled by His-487. Position 502 is a phosphoserine (Ser-502). Lys-505 carries the post-translational modification N6-acetyllysine; alternate. Lys-505 is subject to N6-succinyllysine; alternate.

Belongs to the class-I pyridine nucleotide-disulfide oxidoreductase family. As to quaternary structure, homodimer. Part of the multimeric pyruvate dehydrogenase complex that contains multiple copies of pyruvate dehydrogenase (subunits PDHA (PDHA1 or PDHA2) and PDHB, E1), dihydrolipoamide acetyltransferase (DLAT, E2) and lipoamide dehydrogenase (DLD, E3). These subunits are bound to an inner core composed of about 48 DLAT and 12 PDHX molecules (by non covalent bonds). The 2-oxoglutarate dehydrogenase complex is composed of OGDH (2-oxoglutarate dehydrogenase; E1), DLST (dihydrolipoamide succinyltransferase; E2), DLD (dihydrolipoamide dehydrogenase; E3) and the assembly factor KGD4. It contains multiple copies of the three enzymatic components (E1, E2 and E3). In the nucleus, the 2-oxoglutarate dehydrogenase complex associates with KAT2A. Interacts with PDHX. FAD serves as cofactor. Tyrosine phosphorylated.

It is found in the mitochondrion matrix. The protein resides in the nucleus. Its subcellular location is the cell projection. The protein localises to the cilium. It localises to the flagellum. It is found in the cytoplasmic vesicle. The protein resides in the secretory vesicle. Its subcellular location is the acrosome. The catalysed reaction is N(6)-[(R)-dihydrolipoyl]-L-lysyl-[protein] + NAD(+) = N(6)-[(R)-lipoyl]-L-lysyl-[protein] + NADH + H(+). Its function is as follows. Lipoamide dehydrogenase is a component of the glycine cleavage system as well as an E3 component of three alpha-ketoacid dehydrogenase complexes (pyruvate-, alpha-ketoglutarate-, and branched-chain amino acid-dehydrogenase complex). The 2-oxoglutarate dehydrogenase complex is mainly active in the mitochondrion. A fraction of the 2-oxoglutarate dehydrogenase complex also localizes in the nucleus and is required for lysine succinylation of histones: associates with KAT2A on chromatin and provides succinyl-CoA to histone succinyltransferase KAT2A. In monomeric form may have additional moonlighting function as serine protease. Involved in the hyperactivation of spermatazoa during capacitation and in the spermatazoal acrosome reaction. The polypeptide is Dihydrolipoyl dehydrogenase, mitochondrial (DLD) (Canis lupus familiaris (Dog)).